The following is a 91-amino-acid chain: Mercuric transport protein periplasmic component (91 aa).

A signal peptide spans 1–19 (MKKLFASLALAAFVAPVFA). The HMA domain occupies 22–88 (QTVTLSVPGM…ATEDAGYPSS (67 aa)). Cysteine 33 and cysteine 36 together coordinate Hg(2+).

This sequence belongs to the MerP family. In terms of assembly, monomer.

The protein localises to the periplasm. In terms of biological role, involved in mercury resistance. Acts as a mercury scavenger that specifically binds to a mercuric ion in the periplasm and probably passes it to the cytoplasmic mercuric reductase MerA via the mercuric transport protein MerT. The chain is Mercuric transport protein periplasmic component from Acinetobacter calcoaceticus.